The sequence spans 358 residues: 5-amino-6-(D-ribitylamino)uracil--L-tyrosine 4-hydroxyphenyl transferase 2 (358 aa).

The region spanning 45-292 (VTFVKNTNIE…ESIKNIQAPR (248 aa)) is the Radical SAM core domain. C59, C63, and C66 together coordinate [4Fe-4S] cluster.

It belongs to the radical SAM superfamily. CofH family. Consists of two subunits, CofG and CofH. It depends on [4Fe-4S] cluster as a cofactor.

It carries out the reaction 5-amino-6-(D-ribitylamino)uracil + L-tyrosine + S-adenosyl-L-methionine = 5-amino-5-(4-hydroxybenzyl)-6-(D-ribitylimino)-5,6-dihydrouracil + 2-iminoacetate + 5'-deoxyadenosine + L-methionine + H(+). It functions in the pathway cofactor biosynthesis; coenzyme F0 biosynthesis. Its function is as follows. Catalyzes the radical-mediated synthesis of 5-amino-5-(4-hydroxybenzyl)-6-(D-ribitylimino)-5,6-dihydrouracil from 5-amino-6-(D-ribitylamino)uracil and L-tyrosine. This Methanococcus maripaludis (strain DSM 14266 / JCM 13030 / NBRC 101832 / S2 / LL) protein is 5-amino-6-(D-ribitylamino)uracil--L-tyrosine 4-hydroxyphenyl transferase 2.